A 152-amino-acid chain; its full sequence is Large ribosomal subunit protein uL22 (152 aa).

The protein belongs to the universal ribosomal protein uL22 family. Part of the 50S ribosomal subunit.

Its function is as follows. This protein binds specifically to 23S rRNA. It makes multiple contacts with different domains of the 23S rRNA in the assembled 50S subunit and ribosome. Functionally, the globular domain of the protein is located near the polypeptide exit tunnel on the outside of the subunit, while an extended beta-hairpin is found that lines the wall of the exit tunnel in the center of the 70S ribosome. This chain is Large ribosomal subunit protein uL22, found in Methanothrix thermoacetophila (strain DSM 6194 / JCM 14653 / NBRC 101360 / PT) (Methanosaeta thermophila).